The sequence spans 362 residues: Glutamate--cysteine ligase (362 aa).

This sequence belongs to the glutamate--cysteine ligase type 2 family. YbdK subfamily.

The enzyme catalyses L-cysteine + L-glutamate + ATP = gamma-L-glutamyl-L-cysteine + ADP + phosphate + H(+). Functionally, catalyzes the synthesis of gamma-glutamylcysteine (gamma-GC), the main low-molecular-weight thiol compound instead of glutathione in halophilic archaea. The sequence is that of Glutamate--cysteine ligase from Natronomonas pharaonis (strain ATCC 35678 / DSM 2160 / CIP 103997 / JCM 8858 / NBRC 14720 / NCIMB 2260 / Gabara) (Halobacterium pharaonis).